Reading from the N-terminus, the 397-residue chain is Arginine biosynthesis bifunctional protein ArgJ (397 aa).

Residues Thr-143, Lys-169, Thr-180, Glu-266, Asn-392, and Thr-397 each coordinate substrate. Catalysis depends on Thr-180, which acts as the Nucleophile.

It belongs to the ArgJ family. As to quaternary structure, heterotetramer of two alpha and two beta chains.

It is found in the cytoplasm. It catalyses the reaction N(2)-acetyl-L-ornithine + L-glutamate = N-acetyl-L-glutamate + L-ornithine. The catalysed reaction is L-glutamate + acetyl-CoA = N-acetyl-L-glutamate + CoA + H(+). The protein operates within amino-acid biosynthesis; L-arginine biosynthesis; L-ornithine and N-acetyl-L-glutamate from L-glutamate and N(2)-acetyl-L-ornithine (cyclic): step 1/1. Its pathway is amino-acid biosynthesis; L-arginine biosynthesis; N(2)-acetyl-L-ornithine from L-glutamate: step 1/4. Competitively inhibited by L-ornithine. Its function is as follows. Catalyzes two activities which are involved in the cyclic version of arginine biosynthesis: the synthesis of N-acetylglutamate from glutamate and acetyl-CoA as the acetyl donor, and of ornithine by transacetylation between N(2)-acetylornithine and glutamate. The chain is Arginine biosynthesis bifunctional protein ArgJ from Thermotoga neapolitana (strain ATCC 49049 / DSM 4359 / NBRC 107923 / NS-E).